The sequence spans 647 residues: MMDSGNNNMNRAKRNLDGNDDDQPERKRPAFASVIVEALKVDSLQKLCSSLEPILRRVVSEELERALAKLGPARLTGSSGSSPKRIEGPDGRKLQLHFKSRLSLPLFTGGKVEGEQGAVIHVVLIDANTGRAVVYGPEASAKLHIVVLEGDFNTEDDEDWTQEEFESHVVKERSGKRPLLTGEVYVTLKEGVGTLGELVFTDNSSWIRSRKFRLGLRVVSGCCDGMRIREAKTEAFVVKDHRGELYKKHYPPALNDDVWRLDKIGKDGAFHKKLTAEGINTVEDFLRVMVKDSPKLRTILGSGMSNKMWDALVEHAKTCVQSSKLYIYYAEDSRNVGVVFNNIYELSGLISGDQYFSADSLTDSQKVYVEGLVKKAYENWNLVIEYDGKSLLDLKQPQRLSITHTNLENYSTAAIDHPMQMVAGHSSSMPPNQSPVLSDFAIGGYDQTLATRYHSHPQLLNSNPRAQFEVASCSTSQDQFMGNLHQTQSTINNQHMNGLALGPSQSSTSGYQNINPSSVHQADLNHLEDWSNPRERGPDDFFSEEEIRLRSHEMLESEDMQQFLRLFSMGGGGNGSATHLPEDGYTFPSFLHTPMQGYDEDRGRSGRAVVGWLKIKAAMRWGFFIRRKAAERRAQIVELDDDDEDGE.

Over residues 1 to 10 (MMDSGNNNMN) the composition is skewed to polar residues. The segment at 1–26 (MMDSGNNNMNRAKRNLDGNDDDQPER) is disordered. The segment at 8 to 85 (NMNRAKRNLD…TGSSGSSPKR (78 aa)) is calmodulin-binding. The short motif at 12-19 (AKRNLDGN) is the Nuclear localization signal element. Residues 155–278 (EDDEDWTQEE…AFHKKLTAEG (124 aa)) are DNA-binding.

Belongs to the plant ACBP60 protein family. In terms of assembly, interacts with calmodulin (CaM). In terms of tissue distribution, expressed in leaves, stems, flowers, developing seeds and root.

The protein resides in the nucleus. Transcription activator that binds DNA in a sequence-specific manner, likely 5'-GAAATTTTGG-3', to promote the expression of target genes. This is Calmodulin-binding protein 60 B from Arabidopsis thaliana (Mouse-ear cress).